A 121-amino-acid polypeptide reads, in one-letter code: Basic phospholipase A2 caudoxin (121 aa).

7 cysteine pairs are disulfide-bonded: C25–C114, C27–C43, C42–C94, C48–C121, C49–C87, C56–C80, and C74–C85. Ca(2+)-binding residues include Y26, G28, and G30. The active site involves H46. Residue D47 participates in Ca(2+) binding. D88 is an active-site residue.

Belongs to the phospholipase A2 family. Group II subfamily. D49 sub-subfamily. In terms of assembly, monomer. Requires Ca(2+) as cofactor. In terms of tissue distribution, expressed by the venom gland.

It localises to the secreted. The catalysed reaction is a 1,2-diacyl-sn-glycero-3-phosphocholine + H2O = a 1-acyl-sn-glycero-3-phosphocholine + a fatty acid + H(+). Snake venom phospholipase A2 (PLA2) that shows anticoagulant activity and presynaptic neurotoxicity. Acts as an anticoagulant toxin by inhibiting prothrombinase complex formation. Shows about 50% of the prothrombinase complex inhibition compared to CM-IV of N.nigricollis venom. Acts as a neurotoxin by inhibiting neuromuscular transmission by blocking acetylcholine release from the nerve termini. PLA2 catalyzes the calcium-dependent hydrolysis of the 2-acyl groups in 3-sn-phosphoglycerides. The polypeptide is Basic phospholipase A2 caudoxin (Bitis caudalis (Horned adder)).